Here is a 145-residue protein sequence, read N- to C-terminus: UPF0201 protein LS215_1276 (145 aa).

It belongs to the UPF0201 family.

This chain is UPF0201 protein LS215_1276, found in Saccharolobus islandicus (strain L.S.2.15 / Lassen #1) (Sulfolobus islandicus).